We begin with the raw amino-acid sequence, 101 residues long: Alkene monooxygenase system, effector subunit (101 aa).

This sequence belongs to the TmoD/XamoD family. As to quaternary structure, monomer. The alkene monooxygenase multicomponent enzyme system is composed of an electron transfer component and a monooxygenase component interacting with the effector protein XamoD. The electron transfer component is composed of a ferredoxin reductase (XamoF) and a ferredoxin (XamoC), and the monooxygenase component is formed by a heterohexamer (dimer of heterotrimers) of two alpha subunits (XamoA), two beta subunits (XamoE) and two gamma subunits (XamoB).

It is found in the cytoplasm. Effector component of the alkene monooxygenase multicomponent enzyme system which catalyzes the O2- and NADH-dependent epoxidation of short chain (C2 to C6) alkenes to their corresponding epoxides. One possible role of this small protein might be to facilitate electron transfer between the reductase and ferredoxin components. The protein is Alkene monooxygenase system, effector subunit of Xanthobacter autotrophicus (strain ATCC BAA-1158 / Py2).